The primary structure comprises 185 residues: Prenylated Rab acceptor protein 1 (185 aa).

The Cytoplasmic segment spans residues 1–78 (MAAQKDQQKD…RNVEYYQSNY (78 aa)). The tract at residues 30–54 (AGREWLERRRATIRPWGSFVDQRRF) is required for interaction with prenylated RAB3A and VAMP2. 2 helical membrane-spanning segments follow: residues 79–94 (VFVF…VTSP) and 95–112 (MLLV…ILYL). Over 113–131 (RTLQSKFVLFGREVSPAHQ) the chain is Cytoplasmic. The next 2 helical transmembrane spans lie at 132–148 (YALA…LAGA) and 149–165 (GSAV…VIGS). The required for interaction with GDI1 stretch occupies residues 165–185 (SHAAFHQIEAVDGEELQMEPV). The Cytoplasmic segment spans residues 166 to 185 (HAAFHQIEAVDGEELQMEPV). The interval 175 to 185 (VDGEELQMEPV) is required for interaction with prenylated RAB3A and VAMP2. Positions 175–185 (VDGEELQMEPV) are homodimerization.

This sequence belongs to the PRA1 family. Homodimer. Interacts with VAMP2 (synaptobrevin-2), prenylated Rab proteins, GDI1, NRDG1 and PCLO.

It is found in the cell membrane. Its subcellular location is the cytoplasm. The protein resides in the golgi apparatus. It localises to the cytoplasmic vesicle. The protein localises to the secretory vesicle. It is found in the synaptic vesicle. In terms of biological role, general Rab protein regulator required for vesicle formation from the Golgi complex. May control vesicle docking and fusion by mediating the action of Rab GTPases to the SNARE complexes. In addition it inhibits the removal of Rab GTPases from the membrane by GDI1. This is Prenylated Rab acceptor protein 1 (RABAC1) from Sus scrofa (Pig).